Here is a 483-residue protein sequence, read N- to C-terminus: M protein, serotype 6 (483 aa).

Residues 1–42 (MAKNNTNRHYSLRKLKKGTASVAVALSVIGAGLVVNTNEVSA) form the signal peptide. Residues 54 to 171 (DKARELLNKY…IGTLKKTLDE (118 aa)) are a coiled coil. Tandem repeats lie at residues 69–75 (MLQANND), 76–82 (KLTTENN), 83–89 (NLTDQNK), 90–96 (NLTTENK), 97–103 (NLTDQNK), 104–110 (NLTTENK), 111–117 (NLTDQNK), and 118–124 (NLTTENK). The segment at 69–138 (MLQANNDKLT…EENRLTTENK (70 aa)) is 10 X 7 AA approximate tandem repeats of [KMNR]-L-[TQ]-[TDA]-[ENQ]-N-[NDK]. Polar residues predominate over residues 74–87 (NDKLTTENNNLTDQ). Positions 74-157 (NDKLTTENNN…EEEAANKERE (84 aa)) are disordered. Positions 88–113 (NKNLTTENKNLTDQNKNLTTENKNLT) are enriched in low complexity. Composition is skewed to basic and acidic residues over residues 122–135 (ENKELKAEENRLTT) and 143–157 (KLSEAEEEAANKERE). The 9-1; approximate repeat unit spans residues 125-131 (ELKAEEN). 5 tandem repeats follow at residues 132-138 (RLTTENK), 157-181 (ENKEAIGTLKKTLDETVKDKIAKEQ), 182-206 (ESKETIGTLKKTLDETVKDKIAKEQ), 207-231 (ESKETIGTLKKTLDETVKDKIAKEQ), and 232-256 (ESKETIGTLKKILDETVKDKIAREQ). The interval 157-269 (ENKEAIGTLK…QDIGALKQEL (113 aa)) is 4.5 X 25 AA tandem repeats of E-[NS]-K-E-[TA]-I-G-T-L-K-K-[TI]-L-D-E-T-V-K-D-K-I-A-[KR]-E-Q. 2 disordered regions span residues 255–298 (EQKS…EAKK) and 314–345 (VKEEKQISDASRQGLRRDLDASREAKKQVEKA). One copy of the 5-2; truncated repeat lies at 257–269 (KSKQDIGALKQEL). Basic and acidic residues-rich tracts occupy residues 268-298 (ELAKKDEGNKVSEASRKGLRRDLDASREAKK) and 328-345 (LRRDLDASREAKKQVEKA). C repeat units follow at residues 270–304 (AKKDEGNKVSEASRKGLRRDLDASREAKKQVEKDL) and 312–346 (DKVKEEKQISDASRQGLRRDLDASREAKKQVEKAL). The segment at 279 to 347 (SEASRKGLRR…AKKQVEKALE (69 aa)) is binding to CD46. Residues 279 to 347 (SEASRKGLRR…AKKQVEKALE (69 aa)) form a two directly repeated 27 amino acid blocks separated by 15 amino acids region. Residues 280–408 (EASRKGLRRD…LAKLRAGKAS (129 aa)) are a coiled coil. Positions 348–411 (EANSKLAALE…LRAGKASDSQ (64 aa)) are hydrophilic. D repeat units lie at residues 379-384 (AKLEAE), 385-390 (AKALKE), 393-398 (AKQAEE), and 400-405 (AKLRAG). A disordered region spans residues 400-455 (AKLRAGKASDSQTPDAKPGNKVVPGKGQAPQAGTKPNQNKAPMKETKRQLPSTGET). The LPXTG sorting signal motif lies at 449-453 (LPSTG). T452 is subject to Pentaglycyl murein peptidoglycan amidated threonine. A propeptide spans 453–483 (GETANPFFTAAALTVMATAGVAAVVKRKEEN) (removed by sortase).

Belongs to the M protein family.

It localises to the secreted. The protein localises to the cell wall. Its function is as follows. Mediates the attachment of S.pyogenes to skin epithelial cells through the binding of the human membrane cofactor protein CD46. Also binds to the factor H and factor H-like protein 1. These interactions could contribute to the fact that the M6 protein protects the bacterium from the phagocytosis by regulating the complement activation on the bacterial surface. In Streptococcus pyogenes, this protein is M protein, serotype 6 (emm6).